A 492-amino-acid polypeptide reads, in one-letter code: Glutamyl-tRNA(Gln) amidotransferase subunit A (492 aa).

Active-site charge relay system residues include Lys78 and Ser158. Ser182 functions as the Acyl-ester intermediate in the catalytic mechanism.

It belongs to the amidase family. GatA subfamily. In terms of assembly, heterotrimer of A, B and C subunits.

The enzyme catalyses L-glutamyl-tRNA(Gln) + L-glutamine + ATP + H2O = L-glutaminyl-tRNA(Gln) + L-glutamate + ADP + phosphate + H(+). Allows the formation of correctly charged Gln-tRNA(Gln) through the transamidation of misacylated Glu-tRNA(Gln) in organisms which lack glutaminyl-tRNA synthetase. The reaction takes place in the presence of glutamine and ATP through an activated gamma-phospho-Glu-tRNA(Gln). This is Glutamyl-tRNA(Gln) amidotransferase subunit A from Orientia tsutsugamushi (strain Boryong) (Rickettsia tsutsugamushi).